The chain runs to 590 residues: TPR repeat-containing protein PA4667 (590 aa).

5 TPR repeats span residues 235–268 (VAPL…HPDD), 269–302 (KRVR…FPDD), 370–403 (LPAQ…QPDY), 405–438 (IQLY…YPED), and 508–541 (PAIL…YPDH).

This is TPR repeat-containing protein PA4667 from Pseudomonas aeruginosa (strain ATCC 15692 / DSM 22644 / CIP 104116 / JCM 14847 / LMG 12228 / 1C / PRS 101 / PAO1).